We begin with the raw amino-acid sequence, 470 residues long: Uronate isomerase (470 aa).

This sequence belongs to the metallo-dependent hydrolases superfamily. Uronate isomerase family.

The enzyme catalyses D-glucuronate = D-fructuronate. The catalysed reaction is aldehydo-D-galacturonate = keto-D-tagaturonate. Its pathway is carbohydrate metabolism; pentose and glucuronate interconversion. In Vibrio vulnificus (strain YJ016), this protein is Uronate isomerase.